Here is a 338-residue protein sequence, read N- to C-terminus: Phosphoribosylformylglycinamidine cyclo-ligase (338 aa).

It belongs to the AIR synthase family.

It localises to the cytoplasm. It carries out the reaction 2-formamido-N(1)-(5-O-phospho-beta-D-ribosyl)acetamidine + ATP = 5-amino-1-(5-phospho-beta-D-ribosyl)imidazole + ADP + phosphate + H(+). It functions in the pathway purine metabolism; IMP biosynthesis via de novo pathway; 5-amino-1-(5-phospho-D-ribosyl)imidazole from N(2)-formyl-N(1)-(5-phospho-D-ribosyl)glycinamide: step 2/2. The sequence is that of Phosphoribosylformylglycinamidine cyclo-ligase from Thermoplasma acidophilum (strain ATCC 25905 / DSM 1728 / JCM 9062 / NBRC 15155 / AMRC-C165).